A 2617-amino-acid chain; its full sequence is Non-reducing polyketide synthase epaA (2617 aa).

The interval 95–231 is N-terminal acylcarrier protein transacylase domain (SAT); the sequence is PNILLSPMVV…AARSISSLQQ (137 aa). Cys132 serves as the catalytic Nucleophile; for transacylase activity. The Proton donor/acceptor; for transacylase activity role is filled by His250. The 419-residue stretch at 372–790 folds into the Ketosynthase family 3 (KS3) domain; sequence PNEIAVIGMS…GSNASMVVAQ (419 aa). Active-site for beta-ketoacyl synthase activity residues include Cys539, His674, and His713. Positions 902–1193 are malonyl-CoA:ACP transacylase (MAT) domain; sequence FGGQISNYVG…ITSMASRALG (292 aa). Positions 1282 to 1413 are N-terminal hotdog fold; it reads PKTLWSLIEA…GKLAFLSGQD (132 aa). Residues 1282-1591 enclose the PKS/mFAS DH domain; the sequence is PKTLWSLIEA…YHKVAKASMS (310 aa). The interval 1310–1589 is product template (PT) domain; sequence LVSGHVIANT…INYHKVAKAS (280 aa). His1314 acts as the Proton acceptor; for dehydratase activity in catalysis. The C-terminal hotdog fold stretch occupies residues 1443 to 1591; sequence ADDIIQGRNI…YHKVAKASMS (149 aa). Residue Asp1499 is the Proton donor; for dehydratase activity of the active site. Residues 1600–1651 are disordered; it reads TEAAPSSSTRAHPTSSSSPRLPGPSVPEDKSQNETQPAGTNAVAKKKSEKSA. Residues 1602–1619 are compositionally biased toward low complexity; it reads AAPSSSTRAHPTSSSSPR. A Carrier domain is found at 1653-1727; it reads QNVLEKTRAL…GLVEYVQSAV (75 aa). Ser1687 is modified (O-(pantetheine 4'-phosphoryl)serine). The tract at residues 1728-1799 is disordered; it reads GVPTNGDEPD…PAMPPASSKT (72 aa). The segment covering 1750 to 1766 has biased composition (low complexity); the sequence is LAPSPSSSSSSTNLTED. Residues 1769 to 1785 show a composition bias toward polar residues; it reads LDQAETTTNISSYPGQT. The interval 1970–2158 is methyltransferase domain; the sequence is DSLLNKLSYR…VGYGQVDWTD (189 aa). Positions 2240 to 2485 are NADPH-binding (R) domain; sequence ITGATGSLGV…LCWTPVNDVA (246 aa).

Requires pantetheine 4'-phosphate as cofactor.

It functions in the pathway secondary metabolite biosynthesis. Non-reducing polyketide synthase; part of the gene cluster that mediates the biosynthesis of nigerpyrone and its derivatives carbonarone A and pestalamide A. The biosynthesis pathway begins with the polyketide assembly by epaA to form phenylacetyl triketide precursor from successive condensation of two malonyl-CoA, presumably with one phenylacetyl-CoA starter unit produced by the phenylacetyl-CoA ligase epaB. For the nigerpyrone biosynthesis, the reactive polyketide chain is released as an aldehyde through the R-domain. A nonenzymatic cyclization and dehydration may create nigerpyrone. For the biosynthesis of carbonarone A and pestalamide A, an extra methyl group is added through the C-methyltransferase domain. Several further steps involving the dehydrogenase orf1, the cytochrome P450 monooxygenase orf2 and the FAD-dependent monooxygenase orf3 are required to form a carbonarone A precursor which is converted to carbonarone A via cyclization. The O-acetyltransferase epaC could catalyze the transfer of 2-methylsuccinyl-CoA, a common intermediate in the ethylmalonyl-CoA pathway, to generate the final product pestalamide A. The polypeptide is Non-reducing polyketide synthase epaA (Aspergillus niger (strain ATCC MYA-4892 / CBS 513.88 / FGSC A1513)).